Here is a 286-residue protein sequence, read N- to C-terminus: Putative transcription factor kapC (286 aa).

Residues 1-10 (MQPALAPAPH) are compositionally biased toward pro residues. The tract at residues 1-120 (MQPALAPAPH…QNRAAQRAFR (120 aa)) is disordered. Over residues 26–40 (HDQLLAAHQHLSHPQ) the composition is skewed to low complexity. A compositionally biased stretch (pro residues) spans 41-54 (QPRPQAPATQPPHM). The segment covering 55-67 (QPNTASPRDQNNI) has biased composition (polar residues). A compositionally biased stretch (pro residues) spans 81 to 92 (PQTPPQPEPAPQ). The bZIP domain maps to 102 to 165 (PLSTSKRAAQ…EYIINLQTRL (64 aa)). The segment at 103 to 126 (LSTSKRAAQNRAAQRAFRQRKESY) is basic motif. A compositionally biased stretch (low complexity) spans 108–118 (RAAQNRAAQRA). The tract at residues 130-161 (LEEQVKHQEAITEEYKALHAENYQLREYIINL) is leucine-zipper. Residues 197–286 (RGNAASAGPA…QEPDGLPVVS (90 aa)) are disordered. A compositionally biased stretch (low complexity) spans 198 to 222 (GNAASAGPAPAGPGPQQSQPNQNQG).

Belongs to the bZIP family.

It is found in the nucleus. Its function is as follows. Putative transcription factor. This is Putative transcription factor kapC (kapC) from Aspergillus terreus (strain NIH 2624 / FGSC A1156).